The following is a 310-amino-acid chain: 4-hydroxyproline epimerase (310 aa).

The active-site Proton acceptor is the Cys88. Substrate-binding positions include 89–90, His208, and Asp232; that span reads GH. Cys236 (proton donor) is an active-site residue. A substrate-binding site is contributed by 237 to 238; that stretch reads GT.

This sequence belongs to the proline racemase family. As to quaternary structure, homodimer.

The catalysed reaction is trans-4-hydroxy-L-proline = cis-4-hydroxy-D-proline. Functionally, allows intracellular utilization of 4-hydroxyproline, one of the major constituents of host collagen, by converting 4-hydroxy-L-proline to 4-hydroxy-D-proline, which can be further metabolized by intracellular 4-hydroxy-D-proline oxidases. This Burkholderia cenocepacia (strain HI2424) protein is 4-hydroxyproline epimerase.